The following is an 88-amino-acid chain: MIDKKQKQKIVSEFGKNESDTGSVGVQIALITGRIKYLTEHLKTNKKDHSSKRGLLKLVGQRRSLLRYYQKKDLEAYRILISKLGLRK.

It belongs to the universal ribosomal protein uS15 family. As to quaternary structure, part of the 30S ribosomal subunit. Forms a bridge to the 50S subunit in the 70S ribosome, contacting the 23S rRNA.

In terms of biological role, one of the primary rRNA binding proteins, it binds directly to 16S rRNA where it helps nucleate assembly of the platform of the 30S subunit by binding and bridging several RNA helices of the 16S rRNA. Forms an intersubunit bridge (bridge B4) with the 23S rRNA of the 50S subunit in the ribosome. The polypeptide is Small ribosomal subunit protein uS15 (Borrelia garinii subsp. bavariensis (strain ATCC BAA-2496 / DSM 23469 / PBi) (Borreliella bavariensis)).